The chain runs to 175 residues: Peptide deformylase (175 aa).

2 residues coordinate Fe cation: Cys-98 and His-140. Residue Glu-141 is part of the active site. His-144 contacts Fe cation.

The protein belongs to the polypeptide deformylase family. The cofactor is Fe(2+).

The enzyme catalyses N-terminal N-formyl-L-methionyl-[peptide] + H2O = N-terminal L-methionyl-[peptide] + formate. In terms of biological role, removes the formyl group from the N-terminal Met of newly synthesized proteins. Requires at least a dipeptide for an efficient rate of reaction. N-terminal L-methionine is a prerequisite for activity but the enzyme has broad specificity at other positions. The protein is Peptide deformylase of Bradyrhizobium sp. (strain BTAi1 / ATCC BAA-1182).